The sequence spans 41 residues: Large ribosomal subunit protein bL36 (41 aa).

This sequence belongs to the bacterial ribosomal protein bL36 family.

The sequence is that of Large ribosomal subunit protein bL36 from Bartonella tribocorum (strain CIP 105476 / IBS 506).